The chain runs to 109 residues: Phosphoribosyl-ATP pyrophosphatase (109 aa).

Belongs to the PRA-PH family.

The protein resides in the cytoplasm. It carries out the reaction 1-(5-phospho-beta-D-ribosyl)-ATP + H2O = 1-(5-phospho-beta-D-ribosyl)-5'-AMP + diphosphate + H(+). Its pathway is amino-acid biosynthesis; L-histidine biosynthesis; L-histidine from 5-phospho-alpha-D-ribose 1-diphosphate: step 2/9. The sequence is that of Phosphoribosyl-ATP pyrophosphatase from Azorhizobium caulinodans (strain ATCC 43989 / DSM 5975 / JCM 20966 / LMG 6465 / NBRC 14845 / NCIMB 13405 / ORS 571).